The following is a 245-amino-acid chain: 1-(5-phosphoribosyl)-5-[(5-phosphoribosylamino)methylideneamino] imidazole-4-carboxamide isomerase (245 aa).

D7 functions as the Proton acceptor in the catalytic mechanism. D129 acts as the Proton donor in catalysis.

This sequence belongs to the HisA/HisF family.

Its subcellular location is the cytoplasm. The catalysed reaction is 1-(5-phospho-beta-D-ribosyl)-5-[(5-phospho-beta-D-ribosylamino)methylideneamino]imidazole-4-carboxamide = 5-[(5-phospho-1-deoxy-D-ribulos-1-ylimino)methylamino]-1-(5-phospho-beta-D-ribosyl)imidazole-4-carboxamide. The protein operates within amino-acid biosynthesis; L-histidine biosynthesis; L-histidine from 5-phospho-alpha-D-ribose 1-diphosphate: step 4/9. This Klebsiella pneumoniae subsp. pneumoniae (strain ATCC 700721 / MGH 78578) protein is 1-(5-phosphoribosyl)-5-[(5-phosphoribosylamino)methylideneamino] imidazole-4-carboxamide isomerase.